A 235-amino-acid polypeptide reads, in one-letter code: Glucosamine-6-phosphate deaminase (235 aa).

The Proton acceptor; for enolization step role is filled by Asp62. Catalysis depends on Asn128, which acts as the For ring-opening step. His130 acts as the Proton acceptor; for ring-opening step in catalysis. Glu135 serves as the catalytic For ring-opening step.

The protein belongs to the glucosamine/galactosamine-6-phosphate isomerase family. NagB subfamily.

The catalysed reaction is alpha-D-glucosamine 6-phosphate + H2O = beta-D-fructose 6-phosphate + NH4(+). It participates in amino-sugar metabolism; N-acetylneuraminate degradation; D-fructose 6-phosphate from N-acetylneuraminate: step 5/5. Functionally, catalyzes the reversible isomerization-deamination of glucosamine 6-phosphate (GlcN6P) to form fructose 6-phosphate (Fru6P) and ammonium ion. The chain is Glucosamine-6-phosphate deaminase from Streptococcus gordonii (strain Challis / ATCC 35105 / BCRC 15272 / CH1 / DL1 / V288).